The chain runs to 282 residues: Bifunctional protein FolD (282 aa).

NADP(+) contacts are provided by residues 165–167 (NRS), S190, and I231.

This sequence belongs to the tetrahydrofolate dehydrogenase/cyclohydrolase family. In terms of assembly, homodimer.

It carries out the reaction (6R)-5,10-methylene-5,6,7,8-tetrahydrofolate + NADP(+) = (6R)-5,10-methenyltetrahydrofolate + NADPH. It catalyses the reaction (6R)-5,10-methenyltetrahydrofolate + H2O = (6R)-10-formyltetrahydrofolate + H(+). It participates in one-carbon metabolism; tetrahydrofolate interconversion. Catalyzes the oxidation of 5,10-methylenetetrahydrofolate to 5,10-methenyltetrahydrofolate and then the hydrolysis of 5,10-methenyltetrahydrofolate to 10-formyltetrahydrofolate. The protein is Bifunctional protein FolD of Clostridium botulinum (strain Kyoto / Type A2).